Reading from the N-terminus, the 490-residue chain is Cyclin-A2-1 (490 aa).

The segment at 34-76 is disordered; that stretch reads FAPSVSLPARTERKQTAKGKTKRGALDEITSASTATSAPQPKR. Residues 63–72 show a composition bias toward polar residues; the sequence is TSASTATSAP.

Belongs to the cyclin family. Cyclin AB subfamily.

This is Cyclin-A2-1 (CYCA2-1) from Oryza sativa subsp. japonica (Rice).